The following is a 359-amino-acid chain: 3-dehydroquinate synthase (359 aa).

Residues 69–74 (DAEDGK), 103–107 (GAVTD), 127–128 (TT), K140, and K149 contribute to the NAD(+) site. The Zn(2+) site is built by E182, H244, and H260.

This sequence belongs to the sugar phosphate cyclases superfamily. Dehydroquinate synthase family. The cofactor is NAD(+). Co(2+) is required as a cofactor. It depends on Zn(2+) as a cofactor.

It localises to the cytoplasm. The catalysed reaction is 7-phospho-2-dehydro-3-deoxy-D-arabino-heptonate = 3-dehydroquinate + phosphate. It participates in metabolic intermediate biosynthesis; chorismate biosynthesis; chorismate from D-erythrose 4-phosphate and phosphoenolpyruvate: step 2/7. Functionally, catalyzes the conversion of 3-deoxy-D-arabino-heptulosonate 7-phosphate (DAHP) to dehydroquinate (DHQ). The polypeptide is 3-dehydroquinate synthase (Corynebacterium pseudotuberculosis (strain C231)).